Consider the following 218-residue polypeptide: CD99 antigen-like protein 2 (218 aa).

A signal peptide spans 1–25 (MVAWRSAFLVCLAFSLATLVQRGSG). Topologically, residues 26-136 (DFDDFNLKDA…PGSGMVAETG (111 aa)) are extracellular. A disordered region spans residues 72-128 (LADALDDRNDRDDGRRKPIAGGGGFSDKDLEDIVGGGEYKPDKGKGDGRYGSNDDPG). 2 stretches are compositionally biased toward basic and acidic residues: residues 76–87 (LDDRNDRDDGRR) and 110–119 (YKPDKGKGDG). The O-linked (Xyl...) (chondroitin sulfate) serine glycan is linked to serine 129. The helical transmembrane segment at 137–157 (TIAGVASALAMALIGAVSSYI) threads the bilayer. The Cytoplasmic portion of the chain corresponds to 158-218 (SYQQKKFCFS…EPPPSEPARI (61 aa)).

This sequence belongs to the CD99 family. O-glycosylated.

It localises to the cell membrane. The protein resides in the cell junction. It is found in the secreted. Plays a role in a late step of leukocyte extravasation helping cells to overcome the endothelial basement membrane. Acts at the same site as, but independently of, PECAM1. Homophilic adhesion molecule, but these interactions may not be required for cell aggregation. The protein is CD99 antigen-like protein 2 (CD99L2) of Pongo abelii (Sumatran orangutan).